A 231-amino-acid polypeptide reads, in one-letter code: Orotate phosphoribosyltransferase (231 aa).

5-phospho-alpha-D-ribose 1-diphosphate is bound by residues lysine 27, 79-80 (YK), arginine 106, lysine 107, lysine 110, histidine 112, and 133-141 (DDVMTAGTA). The orotate site is built by threonine 137 and arginine 166.

It belongs to the purine/pyrimidine phosphoribosyltransferase family. PyrE subfamily. In terms of assembly, homodimer. Mg(2+) is required as a cofactor.

It carries out the reaction orotidine 5'-phosphate + diphosphate = orotate + 5-phospho-alpha-D-ribose 1-diphosphate. The protein operates within pyrimidine metabolism; UMP biosynthesis via de novo pathway; UMP from orotate: step 1/2. Its function is as follows. Catalyzes the transfer of a ribosyl phosphate group from 5-phosphoribose 1-diphosphate to orotate, leading to the formation of orotidine monophosphate (OMP). This chain is Orotate phosphoribosyltransferase, found in Bifidobacterium longum (strain NCC 2705).